A 937-amino-acid chain; its full sequence is MGDSDDEYDRKRRDKFRGERSAGESYARGADRADRSRGRDEWAERGRPRQDYRDYRPPPRDRGYSPTREGPPMKRMRGDGWGDDARPRFGGHEPYGMYGGYNHDHFGMHPAGPYGHPGGLHPREQQSAGDMQTQPCMMTLKQFLATQDDSISDSEAIQKYNDYKLEFKRQQLNEFFVAHKDEEWFKMKYHPEESLKRKEEQFGFLKRRCDVFVELLDHGDISKVSVDTSNTDPLLRLLDTVVIKLEGGTDEDLKVLDEKPVEIVKILPEKPKVEVKKEPTLEDTIKKEKISIKEEKVEEADKPKEEKDDDKEKPAAEGEEPEGEKNDAEKEVTAEREDMDAEPAAKEPEPEEEPSRKKDRRKRSRSDSGSSSSSSSSSSSSDSEDEKEKEKEDKEEEEEKKETEEEAAPKSPKPVEEGEKEPQEEVENNGHKSGDEEEATKKDQAEPEKMDTDEAVVENNKESEEAEKEKDTSKDEEEANKESNEDKQESEKTETIDLVKDTTVGNSPRALHRTSSIFLRNLAPSITKAEVEAMCKRYNGFLRVAIADPLLERRWFRRGWVTFRRDVNIKEICWNLNNIRLRDCELGAIVNKDLSRRVRPVNGLTCHKTIVRSDIKLCAKIAHNLDDKVGLWKEQEDNGEKNGESFGLQSKNPVLQNITDYLIEEASAEEDELLGLSTEAAKKSNDGELVERDTQLIEVLDKLILYLRVVHSIDFYNHCEYPYEDEMPNRCGIIHARGPPPQNKVTSNEIQEYIRTFEGKMGSFLARAVDLEEEEMKKLGAKDAEAEVEKFIQANTQELAKDKWLCPLSGKKFKGPDFVRKHIFNKHNEKVDEVRKEVEYFNNYLKDTKRPQLPEHPGNTKKAPSDAAPPTAGYRPPYGMAHAYAPMYAPYAQPMMAPAGRARPGFGRGGREPMGEIRRPIIAYSDLDMPNFSDSFL.

Disordered regions lie at residues Met-1–Pro-87, His-109–Ala-128, Lys-293–Ser-507, and Asp-847–Tyr-874. Composition is skewed to basic and acidic residues over residues Tyr-8–Ala-22, Gly-29–Gly-63, and Met-76–Pro-87. Composition is skewed to basic and acidic residues over residues Lys-293–Ala-316, Gly-323–Arg-336, and Pro-343–Arg-356. The span at Asp-367–Ser-381 shows a compositional bias: low complexity. 3 stretches are compositionally biased toward basic and acidic residues: residues Lys-413–Thr-452, Asn-459–Ser-473, and Asn-480–Lys-500.

This sequence belongs to the ARS2 family.

The protein localises to the nucleus. Its function is as follows. Acts as a mediator between the cap-binding complex (CBC) and RNA-mediated gene silencing (RNAi). Involved in innate immunity via the short interfering RNAs (siRNAs) processing machinery by restricting the viral RNA production. Also involved microRNA (miRNA)-mediated silencing by contributing to the stability and delivery of primary miRNA transcripts to the primary miRNA processing complex. The sequence is that of Serrate RNA effector molecule homolog (Ars2) from Aedes aegypti (Yellowfever mosquito).